The chain runs to 316 residues: Protein PXR1 (316 aa).

Residues 25–71 enclose the G-patch domain; that stretch reads TSRFGHQYLERMGWKPGKGLGLVEHATTSHVKVSIKDDNLGLGSKLA. Positions 146–280 are disordered; that stretch reads GTTKKRKIDS…DSMLMPKEQL (135 aa). The span at 179–195 shows a compositional bias: basic and acidic residues; it reads DRKEKEEKKTEKENSEI. Basic residues predominate over residues 196 to 209; that stretch reads KKKKKEKKEKKEKK. Over residues 210–240 the composition is skewed to basic and acidic residues; it reads EKKDKNEKKEKKDKNEKKEKKDKNEEKEKKE. Basic residues predominate over residues 241-260; it reads KKEKKEKKDKKDKKDKKDKK. Residues 261–270 show a composition bias toward basic and acidic residues; sequence EKKEVKEVTR.

The protein belongs to the PINX1 family.

Its subcellular location is the nucleus. It localises to the nucleolus. Functionally, involved in rRNA-processing at A0, A1 and A2 sites and negatively regulates telomerase. The chain is Protein PXR1 (PXR1) from Debaryomyces hansenii (strain ATCC 36239 / CBS 767 / BCRC 21394 / JCM 1990 / NBRC 0083 / IGC 2968) (Yeast).